A 134-amino-acid polypeptide reads, in one-letter code: Snaclec alboaggregin-A subunit alpha' (134 aa).

The C-type lectin domain maps to 1 to 134 (DFHCLPGWSA…NPFVCKFPPQ (134 aa)). 3 cysteine pairs are disulfide-bonded: C4/C15, C32/C129, and C104/C121.

The protein belongs to the snaclec family. As to quaternary structure, heterotetramer of the subunits alpha, alpha', beta and beta'; disulfide-linked. In terms of tissue distribution, expressed by the venom gland.

Its subcellular location is the secreted. Its function is as follows. Potent platelet activator that aggregates platelets via both GPIbalpha (GP1BA) and GPVI (GP6). Induces a tyrosine phosphorylation profile in platelets that resembles this produced by collagen, involving the time dependent tyrosine phosphorylation of Fc receptor gamma chain (FCGR1A), phospholipase Cgamma2 (PLCG2), and LAT. The polypeptide is Snaclec alboaggregin-A subunit alpha' (Trimeresurus albolabris (White-lipped pit viper)).